The sequence spans 84 residues: Putative lipoprotein RzoQ (84 aa).

A signal peptide spans 1 to 22 (MRNRNLLKFLPGLLICLIVLTS). Cys23 carries the N-palmitoyl cysteine lipid modification. Residue Cys23 is the site of S-diacylglycerol cysteine attachment.

Its subcellular location is the cell membrane. The chain is Putative lipoprotein RzoQ (rzoQ) from Escherichia coli (strain K12).